Reading from the N-terminus, the 98-residue chain is Large ribosomal subunit protein eL21 (98 aa).

The segment covering 1-17 (MQRSRGFRSKSRRKMTK) has biased composition (basic residues). A disordered region spans residues 1 to 28 (MQRSRGFRSKSRRKMTKVVREGRSNPIT).

The protein belongs to the eukaryotic ribosomal protein eL21 family.

The protein is Large ribosomal subunit protein eL21 of Methanobrevibacter smithii (strain ATCC 35061 / DSM 861 / OCM 144 / PS).